Reading from the N-terminus, the 327-residue chain is Toluene-4-monooxygenase system, hydroxylase component subunit beta (327 aa).

Belongs to the TmoE/XamoE family. In terms of assembly, the alkene monooxygenase multicomponent enzyme system is composed of an electron transfer component and a monooxygenase component interacting with the effector protein TmoD. The electron transfer component is composed of a ferredoxin reductase (TmoF) and a ferredoxin (TmoC), and the monooxygenase component is formed by a heterohexamer (dimer of heterotrimers) of two alpha subunits (TmoA), two beta subunits (TmoE) and two gamma subunits (TmoB).

It carries out the reaction toluene + NADH + O2 + H(+) = 4-methylphenol + NAD(+) + H2O. It participates in xenobiotic degradation; toluene degradation. With respect to regulation, inhibited by Zn(2+) and Cu(2+). In terms of biological role, component of the toluene-4-monooxygenase multicomponent enzyme system which catalyzes the O2- and NADH-dependent hydroxylation of toluene to form p-cresol. Also able to convert benzene to phenol, catechol, and 1,2,3-trihydroxybenzene by successive hydroxylations. This is Toluene-4-monooxygenase system, hydroxylase component subunit beta from Ectopseudomonas mendocina (Pseudomonas mendocina).